Reading from the N-terminus, the 208-residue chain is Ribosomal RNA large subunit methyltransferase E (208 aa).

S-adenosyl-L-methionine contacts are provided by Gly62, Trp64, Asp82, Asp98, and Asp123. Lys163 acts as the Proton acceptor in catalysis.

This sequence belongs to the class I-like SAM-binding methyltransferase superfamily. RNA methyltransferase RlmE family.

Its subcellular location is the cytoplasm. The catalysed reaction is uridine(2552) in 23S rRNA + S-adenosyl-L-methionine = 2'-O-methyluridine(2552) in 23S rRNA + S-adenosyl-L-homocysteine + H(+). In terms of biological role, specifically methylates the uridine in position 2552 of 23S rRNA at the 2'-O position of the ribose in the fully assembled 50S ribosomal subunit. This chain is Ribosomal RNA large subunit methyltransferase E, found in Actinobacillus succinogenes (strain ATCC 55618 / DSM 22257 / CCUG 43843 / 130Z).